The following is a 327-amino-acid chain: Phenylalanine--tRNA ligase alpha subunit (327 aa).

A Mg(2+)-binding site is contributed by Glu252.

Belongs to the class-II aminoacyl-tRNA synthetase family. Phe-tRNA synthetase alpha subunit type 1 subfamily. In terms of assembly, tetramer of two alpha and two beta subunits. The cofactor is Mg(2+).

It localises to the cytoplasm. It catalyses the reaction tRNA(Phe) + L-phenylalanine + ATP = L-phenylalanyl-tRNA(Phe) + AMP + diphosphate + H(+). The protein is Phenylalanine--tRNA ligase alpha subunit of Shigella flexneri.